Reading from the N-terminus, the 664-residue chain is MKLQSLLVSAAVLTSLTENVNAWSPNNSYVPANVTCDDDINLVREASGLSDNETEWLKKRDAYTKEALHSFLNRATSNFSDTSLLSTLFGSNSSNMPKIAVACSGGGYRAMLSGAGMLAAMDNRTDGANEHGLGGLLQGATYLAGLSGGNWLTSTLAWNNWTSVQAIVDNTTESNSIWDISHSILTPDGINIFKTGSRWDDISDDVQDKKDAGFNISLADVWGRALAYNFWPSLHRGGVGYTWSTLREADVFKNGEMPFPITVADGRYPGTTVINLNATLFEFNPFEMGSWDPTLNAFTDVKYLGTNVTNGKPVNKGQCIAGFDNTGFITATSSTLFNQFLLRLNSTDLPSFIANLATDFLEDLSDNSDDIAIYAPNPFKEANFLQKNATSSIIESEYLFLVDGGEDNQNIPLVPLLQKERELDVIFALDNSADTDDYWPDGASLVNTYQRQFGSQGLNLSFPYVPDVNTFVNLGLNKKPTFFGCDARNLTDLEYIPPLIVYIPNSRHSFNGNQSTFKMSYSDSERLGMIKNGFEAATMGNFTDDSDFLGCVGCAIIRRKQQNLNATLPSECSQCFTNYCWNGTIDSRSVSGVGNDDYSSSASLSASAAAASASASASASASASASGSSTHKKNAGNALVNYSNLNTNTFIGVLSVISAVFGLI.

A signal peptide spans 1 to 22 (MKLQSLLVSAAVLTSLTENVNA). N-linked (GlcNAc...) asparagine glycans are attached at residues Asn26, Asn33, Asn52, Asn78, Asn92, Asn123, Asn160, Asn170, Asn215, Asn277, Asn307, Asn345, Asn388, Asn459, Asn489, Asn513, Asn541, Asn565, and Asn582. The region spanning 35 to 586 (TCDDDINLVR…TNYCWNGTID (552 aa)) is the PLA2c domain. Asn634 is lipidated: GPI-anchor amidated asparagine. The propeptide at 635 to 664 (AGNALVNYSNLNTNTFIGVLSVISAVFGLI) is removed in mature form.

It belongs to the lysophospholipase family.

It is found in the cell membrane. The catalysed reaction is a 1-acyl-sn-glycero-3-phosphocholine + H2O = sn-glycerol 3-phosphocholine + a fatty acid + H(+). It catalyses the reaction a 1-acyl-sn-glycero-3-phospho-(1D-myo-inositol) + H2O = sn-glycero-3-phospho-1D-myo-inositol + a fatty acid + H(+). The enzyme catalyses a 1-acyl-sn-glycero-3-phospho-L-serine + H2O = sn-glycero-3-phospho-L-serine + a fatty acid + H(+). It carries out the reaction a 1,2-diacyl-sn-glycero-3-phospho-(1D-myo-inositol) + 2 H2O = sn-glycero-3-phospho-1D-myo-inositol + 2 a carboxylate + 2 H(+). The catalysed reaction is a 1,2-diacyl-sn-glycero-3-phospho-L-serine + 2 H2O = sn-glycero-3-phospho-L-serine + 2 a carboxylate + 2 H(+). It catalyses the reaction 2 1-hexadecanoyl-sn-glycero-3-phosphocholine = 1,2-dihexadecanoyl-sn-glycero-3-phosphocholine + sn-glycerol 3-phosphocholine. The enzyme catalyses 1-hexadecanoyl-sn-glycero-3-phosphocholine + H2O = sn-glycerol 3-phosphocholine + hexadecanoate + H(+). It carries out the reaction 1,2-dihexadecanoyl-sn-glycero-3-phosphocholine + H2O = 1-hexadecanoyl-sn-glycero-3-phosphocholine + hexadecanoate + H(+). In terms of biological role, sequentially removes both fatty acyl groups from diacylglycerophospholipids and therefore has both phospholipase B and lysophospholipase activities. It also displays transacylase activity. Substrate preference is phosphatidylserine &gt; phosphatidylinositol &gt;&gt; phosphatidylcholine &gt; phosphatidylethanolamine. The substrate specificity is pH- and ion-dependent. In contrast with activities observed at optimum pH 3.5, the order of substrate preference at pH 5.5 is phosphatidylcholine = phosphatidylethanolamine &gt;&gt; phosphatidylinositol. Degrades predominantly phosphatidylcholine and to some extent phosphatidylinositol in vivo. The sequence is that of Lysophospholipase 1 from Saccharomyces cerevisiae (strain ATCC 204508 / S288c) (Baker's yeast).